Reading from the N-terminus, the 351-residue chain is Nicotinate-nucleotide--dimethylbenzimidazole phosphoribosyltransferase (351 aa).

The active-site Proton acceptor is the glutamate 317.

Belongs to the CobT family.

The enzyme catalyses 5,6-dimethylbenzimidazole + nicotinate beta-D-ribonucleotide = alpha-ribazole 5'-phosphate + nicotinate + H(+). It functions in the pathway nucleoside biosynthesis; alpha-ribazole biosynthesis; alpha-ribazole from 5,6-dimethylbenzimidazole: step 1/2. Functionally, catalyzes the synthesis of alpha-ribazole-5'-phosphate from nicotinate mononucleotide (NAMN) and 5,6-dimethylbenzimidazole (DMB). The protein is Nicotinate-nucleotide--dimethylbenzimidazole phosphoribosyltransferase of Pseudomonas putida (strain GB-1).